Consider the following 263-residue polypeptide: Uroplakin-3b-like protein 1 (263 aa).

Positions 1-33 are cleaved as a signal peptide; that stretch reads MDNSWRLGPAIGLSAGQSQLLVSLLLLLTRVQP. Residues 34 to 204 are Extracellular-facing; the sequence is GTDVAAPEHI…PGPQSPGTVV (171 aa). 3 N-linked (GlcNAc...) asparagine glycosylation sites follow: N51, N76, and N91. The chain crosses the membrane as a helical span at residues 205–225; the sequence is IIAILSILLAVLLTVLLAVLI. Residues 226-263 are Cytoplasmic-facing; sequence YTCFNSCRSTSLSGPEEAGSVRRYTTHLAFSTPAEGAS.

The protein belongs to the uroplakin-3 family.

The protein localises to the membrane. The sequence is that of Uroplakin-3b-like protein 1 from Homo sapiens (Human).